A 4981-amino-acid chain; its full sequence is Protocadherin Fat 4 (4981 aa).

A signal peptide spans 1 to 38; sequence MDLAPDRATGRPWLPLHTLSVSQLLRVFWLLSLLPGQA. Topologically, residues 39–4504 are extracellular; the sequence is WVHGAEPRQV…PEEISLPLWA (4466 aa). Cadherin domains lie at 43-135, 136-250, 251-353, 359-475, 476-582, 584-689, 690-793, 794-893, 894-996, 997-1100, 1101-1210, 1211-1315, 1316-1420, 1421-1529, 1529-1629, 1630-1740, 1741-1841, 1842-1944, 1945-2051, 2051-2154, 2155-2259, 2260-2364, 2365-2466, 2467-2567, 2568-2669, 2670-2773, 2773-2872, 2873-2983, 2984-3089, 3090-3194, 3195-3298, 3299-3404, 3405-3510, and 3509-3620; these read AEPR…APVF, PDPS…PPVF, GSSH…DPVV, PATS…PPVF, SQQV…KPVF, QPEG…SPVF, YPVQ…PPVF, SQVA…SPHF, LQAI…SPVF, DQLS…RPLF, NSTN…APKF, LKDF…TPSF, PKST…PPSF, PPGD…VPMF, FISQ…GPVF, TQPK…PPVF, PTDM…TPKF, SRPV…PPIF, SLNS…PPTF, FLSP…NPIF, AQAL…VPVF, ELSP…VPTF, ASKA…PPRF, QHHP…FPKV, RAKE…APIF, KEDP…APRF, FSQI…APRF, SRTS…APQF, LKSK…TPEF, SQSH…SPVF, LSDD…VPRF, VSKL…PPIF, TLNI…GPML, and MLTV…VEIF. N-linked (GlcNAc...) asparagine glycosylation is found at Asn84 and Asn237. Residues Asn393, Asn416, Asn435, Asn483, Asn551, Asn615, Asn676, Asn721, Asn825, Asn880, Asn946, Asn1085, Asn1101, Asn1104, Asn1225, Asn1296, Asn1389, and Asn1514 are each glycosylated (N-linked (GlcNAc...) asparagine). Asn1828, Asn1899, Asn1967, and Asn2119 each carry an N-linked (GlcNAc...) asparagine glycan. 2 N-linked (GlcNAc...) asparagine glycosylation sites follow: Asn2387 and Asn2430. Asn2921, Asn2937, Asn3036, Asn3140, Asn3217, Asn3392, and Asn3477 each carry an N-linked (GlcNAc...) asparagine glycan. Residues Asn3706 and Asn3758 are each glycosylated (N-linked (GlcNAc...) asparagine). The 59-residue stretch at 3802–3860 folds into the EGF-like 1 domain; sequence DHDSCVHGPCQNGGSCLRRLAVSSVLKSRESLPVIIVANEPLQPFLCKCLPGYAGSWCE. Disulfide bonds link Cys3806/Cys3817, Cys3811/Cys3848, Cys3850/Cys3859, Cys3866/Cys3877, Cys3871/Cys3886, Cys3888/Cys3897, Cys3904/Cys3915, Cys3909/Cys3924, Cys3926/Cys3935, Cys3942/Cys3953, Cys3947/Cys3962, and Cys3964/Cys3973. The EGF-like 2; calcium-binding domain occupies 3862 to 3898; sequence DIDECLPSPCHSGGTCHNLVGGFSCSCPDGFTGRACE. One can recognise an EGF-like 3; calcium-binding domain in the interval 3900 to 3936; the sequence is DINECLQSPCKNGAICQNFPGSFNCVCKTGYTGKMCE. Residues 3938 to 3974 form the EGF-like 4 domain; that stretch reads SVNYCECNPCFNGGSCQSGVDSYYCHCPFGVFGKHCE. Residues 3975–4159 enclose the Laminin G-like 1 domain; it reads LNSYGFEELS…LAAQGILDQC (185 aa). Residue Asn4017 is glycosylated (N-linked (GlcNAc...) asparagine). Cystine bridges form between Cys4133/Cys4159, Cys4166/Cys4177, Cys4171/Cys4186, and Cys4188/Cys4197. In terms of domain architecture, EGF-like 5 spans 4162–4198; that stretch reads LEGACTRSPCQHGGTCMDYWSWQQCHCKEGLTGKYCE. Residues 4217–4398 enclose the Laminin G-like 2 domain; sequence YHMSQNEKRE…KTDPSVKIGC (182 aa). N-linked (GlcNAc...) asparagine glycosylation is found at Asn4267 and Asn4312. Intrachain disulfides connect Cys4365–Cys4398, Cys4430–Cys4441, Cys4435–Cys4451, and Cys4453–Cys4462. In terms of domain architecture, EGF-like 6 spans 4426-4463; that stretch reads PPGDCASHPCQNGGSCEPGLHSGFTCSCPDSHTGRTCE. Residues 4505–4525 traverse the membrane as a helical segment; that stretch reads VPAIVGSCATVLALLVLSLIL. At 4526-4981 the chain is on the cytoplasmic side; that stretch reads CNQCRGKKAK…PKDGEAEQYV (456 aa). 5 disordered regions span residues 4534–4584, 4680–4713, 4752–4856, 4869–4911, and 4957–4981; these read AKNP…PDII, QGLR…STFY, RSKS…MEYD, KLSQ…AAPG, and AAAN…EQYV. A compositionally biased stretch (polar residues) spans 4680–4699; sequence QGLRTSSLSHSACPTPNPLS. The necessary and sufficient for interaction with MPDZ stretch occupies residues 4706–4795; that stretch reads FSKSSTFYRN…GLSIEEVERL (90 aa). Positions 4809-4821 are enriched in basic and acidic residues; it reads DHGRSSSEEDCRR. Position 4876 is a phosphoserine (Ser4876). Positions 4971-4981 are enriched in basic and acidic residues; sequence VPKDGEAEQYV.

Heterophilic interaction with DCHS1; this interaction affects their respective protein levels. Interacts (via cytoplasmic domain) with MPDZ. Forms a complex with PALS1 and MPDZ. Widely expressed. Expressed in fetal brain, infant brain, brain tumor and colorectal cancer.

It localises to the membrane. Functionally, cadherins are calcium-dependent cell adhesion proteins. FAT4 plays a role in the maintenance of planar cell polarity as well as in inhibition of YAP1-mediated neuroprogenitor cell proliferation and differentiation. In Homo sapiens (Human), this protein is Protocadherin Fat 4 (FAT4).